We begin with the raw amino-acid sequence, 287 residues long: MKPLASLRDIKTRINATKKTSQITKAMEMVSTSKLNRAEKREIVRPYMEKIQEVVAMSASAARSHPMLVSRPVKKTGYLVITSDRGLAGAYNSNVVRLVYPKRSKNAMLPPDEIAIIVIGRVGLSFFRKRNMPVILDITRLPDQPSFADIKEIARKTVGLFADGTFDELYMYYNHYVSAIQQEVTERKLLPLTDFLAENKQRTVYEFEPSQEEILDVLLPQYAESLIYGALLDAKASEHAARMTAMKNATDNANDVIRTLTLSYNRARQAAITQEITEIVAGRNALQ.

This sequence belongs to the ATPase gamma chain family. In terms of assembly, F-type ATPases have 2 components, CF(1) - the catalytic core - and CF(0) - the membrane proton channel. CF(1) has five subunits: alpha(3), beta(3), gamma(1), delta(1), epsilon(1). CF(0) has three main subunits: a, b and c.

The protein resides in the cell membrane. In terms of biological role, produces ATP from ADP in the presence of a proton gradient across the membrane. The gamma chain is believed to be important in regulating ATPase activity and the flow of protons through the CF(0) complex. The chain is ATP synthase gamma chain from Bacillus caldotenax.